The primary structure comprises 446 residues: C4-dicarboxylate transport protein (446 aa).

A run of 9 helical transmembrane segments spans residues Val25 to Gly45, Leu58 to Ile78, Phe93 to Val113, Ala159 to Leu179, Val199 to Met219, Leu236 to Val256, Ile322 to Gly342, Ala370 to Ile390, and Leu400 to Leu420.

The protein belongs to the dicarboxylate/amino acid:cation symporter (DAACS) (TC 2.A.23) family.

It is found in the cell inner membrane. Responsible for the transport of dicarboxylates such as succinate, fumarate, and malate from the periplasm across the membrane. The chain is C4-dicarboxylate transport protein from Sphingopyxis alaskensis (strain DSM 13593 / LMG 18877 / RB2256) (Sphingomonas alaskensis).